Reading from the N-terminus, the 204-residue chain is Ubiquitin-conjugating enzyme E2 T (204 aa).

In terms of domain architecture, UBC core spans 2 to 152; it reads QRASRLKKEL…AKQWTEAHAR (151 aa). C86 (glycyl thioester intermediate) is an active-site residue. Glycyl lysine isopeptide (Lys-Gly) (interchain with G-Cter in ubiquitin) cross-links involve residues K91 and K181. Residues 150–204 are disordered; the sequence is HARQKQKADEEELGTSSEVGDSEESHSTQKRKARPLGGMEKKFSPDVQRVYPGPS. Glycyl lysine isopeptide (Lys-Gly) (interchain with G-Cter in SUMO2) cross-links involve residues K190 and K191. A Phosphoserine modification is found at S193.

Belongs to the ubiquitin-conjugating enzyme family. As to quaternary structure, interacts with FANCL and BRCA1. Auto-ubiquitinated. Effects of auto-monoubiquitination at Lys-91 and Lys-181 are unclear.

The protein localises to the nucleus. The catalysed reaction is S-ubiquitinyl-[E1 ubiquitin-activating enzyme]-L-cysteine + [E2 ubiquitin-conjugating enzyme]-L-cysteine = [E1 ubiquitin-activating enzyme]-L-cysteine + S-ubiquitinyl-[E2 ubiquitin-conjugating enzyme]-L-cysteine.. It participates in protein modification; protein ubiquitination. Its function is as follows. Accepts ubiquitin from the E1 complex and catalyzes its covalent attachment to other proteins. Catalyzes monoubiquitination. Involved in mitomycin-C (MMC)-induced DNA repair: acts as a specific E2 ubiquitin-conjugating enzyme for the Fanconi anemia complex by associating with E3 ubiquitin-protein ligase FANCL and catalyzing monoubiquitination of FANCD2, a key step in the DNA damage pathway. Also mediates monoubiquitination of FANCL and FANCI. May contribute to ubiquitination and degradation of BRCA1. In vitro able to promote polyubiquitination using all 7 ubiquitin Lys residues, but may prefer 'Lys-11'-, 'Lys-27'-, 'Lys-48'- and 'Lys-63'-linked polyubiquitination. The protein is Ubiquitin-conjugating enzyme E2 T (Ube2t) of Mus musculus (Mouse).